The primary structure comprises 168 residues: Photosystem I assembly protein Ycf3 (168 aa).

3 TPR repeats span residues 35 to 68 (AFTYYRDGMSAQSEGEYAEALQNYYEAMRLEIDP), 72 to 105 (SYILYNIGLIHTSNGEHAKALEYYFQALERNPSL), and 120 to 153 (GEQAIQQGDSETSEAWFNQAADYWKQAIALAPSN).

This sequence belongs to the Ycf3 family.

Its subcellular location is the plastid. It localises to the chloroplast thylakoid membrane. Functionally, essential for the assembly of the photosystem I (PSI) complex. May act as a chaperone-like factor to guide the assembly of the PSI subunits. This chain is Photosystem I assembly protein Ycf3, found in Physcomitrium patens (Spreading-leaved earth moss).